A 116-amino-acid polypeptide reads, in one-letter code: Methionine-R-sulfoxide reductase B1 (116 aa).

Residues 1–106 (MSFCSFFGGE…FSSSLKFIPK (106 aa)) form the MsrB domain. Zn(2+) contacts are provided by cysteine 23, cysteine 26, cysteine 71, and cysteine 74. Catalysis depends on selenocysteine 95, which acts as the Nucleophile. Position 95 (selenocysteine 95) is a non-standard amino acid, selenocysteine.

The protein belongs to the MsrB Met sulfoxide reductase family. Requires Zn(2+) as cofactor. In terms of processing, truncated MSRB1/SEPX1 proteins produced by failed UGA/Sec decoding are ubiquitinated by the CRL2(FEM1C) E3 ubiquitin-protein ligase complex.

Its subcellular location is the cytoplasm. It is found in the nucleus. The protein localises to the cytoskeleton. The catalysed reaction is L-methionyl-[protein] + [thioredoxin]-disulfide + H2O = L-methionyl-(R)-S-oxide-[protein] + [thioredoxin]-dithiol. It carries out the reaction [thioredoxin]-disulfide + L-methionine + H2O = L-methionine (R)-S-oxide + [thioredoxin]-dithiol. Methionine-sulfoxide reductase that specifically reduces methionine (R)-sulfoxide back to methionine. While in many cases, methionine oxidation is the result of random oxidation following oxidative stress, methionine oxidation is also a post-translational modification that takes place on specific residue. Acts as a regulator of actin assembly by reducing methionine (R)-sulfoxide mediated by MICALs (MICAL1, MICAL2 or MICAL3) on actin, thereby promoting filament repolymerization. Plays a role in innate immunity by reducing oxidized actin, leading to actin repolymerization in macrophages. The sequence is that of Methionine-R-sulfoxide reductase B1 (Msrb1) from Rattus norvegicus (Rat).